Reading from the N-terminus, the 1385-residue chain is Kinesin-like protein KIF15 (1385 aa).

The segment at 1–24 (MAPGCKSELRNVTNSHSNQPSNED) is disordered. A compositionally biased stretch (polar residues) spans 10 to 21 (RNVTNSHSNQPS). The region spanning 26–363 (AIKVFVRIRP…LNFAQRAKLI (338 aa)) is the Kinesin motor domain. 109-116 (GQTGSGKT) lines the ATP pocket. Residues 368 to 1385 (VVNEDTQGNV…NVFLKERKKE (1018 aa)) are a coiled coil. An N6-acetyllysine modification is found at lysine 1007. Phosphoserine occurs at positions 1139 and 1167. Residues 1222-1243 (DMKRQGESSSQSRPDSQQLKNE) form a disordered region. Positions 1228 to 1241 (ESSSQSRPDSQQLK) are enriched in polar residues.

Belongs to the TRAFAC class myosin-kinesin ATPase superfamily. Kinesin family. KLP2 subfamily. Interacts with MKI67 and TPX2. In terms of tissue distribution, expressed in sympathetic neurons.

The protein localises to the cytoplasm. The protein resides in the cytoskeleton. It is found in the spindle. Functionally, plus-end directed kinesin-like motor enzyme involved in mitotic spindle assembly. This chain is Kinesin-like protein KIF15 (Kif15), found in Rattus norvegicus (Rat).